Here is a 766-residue protein sequence, read N- to C-terminus: Pumilio domain-containing protein 12 (766 aa).

Disordered regions lie at residues 63–98 (KKSSSTSVFDNDGTRDSLCSESSFGSQPAPKKKSKK) and 152–197 (AQEE…GDES). Polar residues predominate over residues 79–88 (SLCSESSFGS). The segment covering 179 to 193 (PADDENLESVDEQAG) has biased composition (acidic residues). The 358-residue stretch at 245-602 (ARAQKCKELW…LYAGITENLY (358 aa)) folds into the PUM-HD domain. Pumilio repeat units lie at residues 313 to 348 (ELTPEIVRMSKNVYSKFFVKKMLKNGTKEQRDIIIN), 461 to 496 (SLKDKIPEFIHTPDGAKLAIKLIWFAPVKERKLIVK), 497 to 534 (NFKDLSVKAAMEHYGHRVLLALFDTVDDTVLLNKVIVS), and 535 to 571 (ELANEMKKLIEDDWGEKVIHYLVHPRDGRGIDKREIT).

The polypeptide is Pumilio domain-containing protein 12 (puf-12) (Caenorhabditis elegans).